Here is a 218-residue protein sequence, read N- to C-terminus: YlmG homolog protein 1-2, chloroplastic (218 aa).

A chloroplast-targeting transit peptide spans 1–83 (MASFTTNSLA…TRSITTLVLL (83 aa)). 2 consecutive transmembrane segments (helical) span residues 133–153 (LTVVAAGLSKWLDIYSGVLMV) and 187–207 (IIPPVFDTLDVSPLLAFAVLG).

This sequence belongs to the YggT family.

The protein resides in the plastid. The protein localises to the chloroplast thylakoid membrane. Functionally, not required for the biogenesis and accumulation of native cytochrome b6 in the thylakoid membrane. Not functionally involved in the pathway for covalent binding of the c-type heme to cytochrome b6. This chain is YlmG homolog protein 1-2, chloroplastic, found in Arabidopsis thaliana (Mouse-ear cress).